A 353-amino-acid polypeptide reads, in one-letter code: D-alanine--D-alanine ligase (353 aa).

The ATP-grasp domain maps to 141–349 (KAAFAAAGLP…LPDLVAQLVH (209 aa)). 176–231 (EAELGYPCFVKPANMGSSVGISKARHRDQLLAGLKEAARHDTRLVVEHGVSARELE) provides a ligand contact to ATP. Mg(2+)-binding residues include D302, E316, and N318.

The protein belongs to the D-alanine--D-alanine ligase family. Mg(2+) is required as a cofactor. The cofactor is Mn(2+).

The protein localises to the cytoplasm. It carries out the reaction 2 D-alanine + ATP = D-alanyl-D-alanine + ADP + phosphate + H(+). It functions in the pathway cell wall biogenesis; peptidoglycan biosynthesis. Functionally, cell wall formation. The protein is D-alanine--D-alanine ligase of Synechococcus sp. (strain CC9311).